The following is a 581-amino-acid chain: Myoneurin (581 aa).

The BTB domain maps to 24 to 89 (CDCTIVIGEF…IYTGTLNLDS (66 aa)). Positions 167-193 (PKQGALAKKSSQTKKKKKAFNSQKTGQ) are disordered. Short sequence motifs (nuclear localization signal) lie at residues 174-190 (KKSS…NSQK) and 256-261 (KRKRGK). Serine 288 bears the Phosphoserine mark. 7 C2H2-type zinc fingers span residues 301 to 323 (PMCN…MRIH), 329 to 351 (YVCH…VRTH), 357 to 380 (YKCE…RMHH), 386 to 408 (YKCD…ARKH), 414 to 436 (YVCD…VRRH), 442 to 464 (YVCD…SRKH), and 470 to 493 (FICE…TKVH).

This sequence belongs to the krueppel C2H2-type zinc-finger protein family.

The protein localises to the nucleus. In Bos taurus (Bovine), this protein is Myoneurin (MYNN).